The following is a 295-amino-acid chain: Hepatic leukemia factor (295 aa).

A compositionally biased stretch (basic and acidic residues) spans 37–52 (EDAFSKDKDKEKKLDD). Disordered stretches follow at residues 37-70 (EDAF…PTLW) and 93-167 (SENG…IDPD). Residues 225–288 (DDKYWARRRK…GKCKNILAKY (64 aa)) enclose the bZIP domain. The basic motif stretch occupies residues 227–247 (KYWARRRKNNMAAKRSRDARR). The tract at residues 248-255 (LKENQIAI) is leucine-zipper.

The protein belongs to the bZIP family. PAR subfamily. As to quaternary structure, binds DNA specifically as homodimer or heterodimer with other PAR factors. Highly expressed in liver; lower levels in lung and kidney.

It is found in the nucleus. The polypeptide is Hepatic leukemia factor (HLF) (Homo sapiens (Human)).